The chain runs to 680 residues: tRNA 5-methylaminomethyl-2-thiouridine biosynthesis bifunctional protein MnmC (680 aa).

The segment at 1-245 (MSHPPIQTAT…KREMLTGILP (245 aa)) is tRNA (mnm(5)s(2)U34)-methyltransferase. Residues 270–680 (IGGGIVSALT…PVQQRVSVLS (411 aa)) are FAD-dependent cmnm(5)s(2)U34 oxidoreductase.

This sequence in the N-terminal section; belongs to the methyltransferase superfamily. tRNA (mnm(5)s(2)U34)-methyltransferase family. The protein in the C-terminal section; belongs to the DAO family. Requires FAD as cofactor.

It localises to the cytoplasm. The enzyme catalyses 5-aminomethyl-2-thiouridine(34) in tRNA + S-adenosyl-L-methionine = 5-methylaminomethyl-2-thiouridine(34) in tRNA + S-adenosyl-L-homocysteine + H(+). Its function is as follows. Catalyzes the last two steps in the biosynthesis of 5-methylaminomethyl-2-thiouridine (mnm(5)s(2)U) at the wobble position (U34) in tRNA. Catalyzes the FAD-dependent demodification of cmnm(5)s(2)U34 to nm(5)s(2)U34, followed by the transfer of a methyl group from S-adenosyl-L-methionine to nm(5)s(2)U34, to form mnm(5)s(2)U34. The chain is tRNA 5-methylaminomethyl-2-thiouridine biosynthesis bifunctional protein MnmC from Yersinia enterocolitica serotype O:8 / biotype 1B (strain NCTC 13174 / 8081).